A 131-amino-acid polypeptide reads, in one-letter code: SPbeta prophage-derived UPF0715 membrane protein YopD (131 aa).

4 helical membrane-spanning segments follow: residues V12 to V32, A38 to F58, L75 to V95, and F108 to F128.

It belongs to the UPF0715 family.

The protein resides in the cell membrane. In Bacillus subtilis (strain 168), this protein is SPbeta prophage-derived UPF0715 membrane protein YopD (yopD).